Here is a 548-residue protein sequence, read N- to C-terminus: Cytochrome P450 monooxygenase hepE (548 aa).

A heme-binding site is contributed by C485.

It belongs to the cytochrome P450 family. Requires heme as cofactor.

The protein operates within secondary metabolite biosynthesis. In terms of biological role, cytochrome P450 monooxygenase; part of the gene cluster that mediates the biosynthesis of heptelidic acid (HA), a sesquiterpene lactone that acts as an inhibitor of glyceraldehyde-3-phosphatedehydrogenase (GAPDH) and a growth inhibitor of the salt-tolerant lactic acid bacteria in soy sauce brewing. The chain is Cytochrome P450 monooxygenase hepE from Aspergillus oryzae (strain ATCC 42149 / RIB 40) (Yellow koji mold).